The chain runs to 224 residues: Ribulose-phosphate 3-epimerase (224 aa).

A substrate-binding site is contributed by serine 8. A divalent metal cation contacts are provided by histidine 31, aspartate 33, and histidine 64. The Proton acceptor role is filled by aspartate 33. Residues histidine 64, 140–143, 173–175, and 195–196 contribute to the substrate site; these read GFGG, DGG, and GS. Aspartate 173 contacts a divalent metal cation. Catalysis depends on aspartate 173, which acts as the Proton donor.

It belongs to the ribulose-phosphate 3-epimerase family. The cofactor is a divalent metal cation.

It carries out the reaction D-ribulose 5-phosphate = D-xylulose 5-phosphate. It participates in carbohydrate degradation. Catalyzes the reversible epimerization of D-ribulose 5-phosphate to D-xylulose 5-phosphate. The polypeptide is Ribulose-phosphate 3-epimerase (Mycobacterium leprae (strain TN)).